The primary structure comprises 324 residues: DNA-directed RNA polymerase subunit alpha (324 aa).

The interval 1-228 (MIEFQKPTIR…EHFNLFTDLS (228 aa)) is alpha N-terminal domain (alpha-NTD). An alpha C-terminal domain (alpha-CTD) region spans residues 245-324 (RNKLLDMTIE…STPKEEEEEK (80 aa)).

This sequence belongs to the RNA polymerase alpha chain family. In terms of assembly, homodimer. The RNAP catalytic core consists of 2 alpha, 1 beta, 1 beta' and 1 omega subunit. When a sigma factor is associated with the core the holoenzyme is formed, which can initiate transcription.

It catalyses the reaction RNA(n) + a ribonucleoside 5'-triphosphate = RNA(n+1) + diphosphate. DNA-dependent RNA polymerase catalyzes the transcription of DNA into RNA using the four ribonucleoside triphosphates as substrates. The polypeptide is DNA-directed RNA polymerase subunit alpha (Caldicellulosiruptor bescii (strain ATCC BAA-1888 / DSM 6725 / KCTC 15123 / Z-1320) (Anaerocellum thermophilum)).